The primary structure comprises 120 residues: Large ribosomal subunit protein bL19c (120 aa).

This sequence belongs to the bacterial ribosomal protein bL19 family.

It localises to the plastid. Its subcellular location is the chloroplast. The polypeptide is Large ribosomal subunit protein bL19c (Phaeodactylum tricornutum (strain CCAP 1055/1)).